Here is an 879-residue protein sequence, read N- to C-terminus: Prostaglandin F2 receptor negative regulator (879 aa).

An N-terminal signal peptide occupies residues 1–21; that stretch reads MGRPAPRPLLLALLSLAVCRG. 2 Ig-like C2-type domains span residues 22-129 and 149-268; these read RVVR…ATVQ and PSSR…KAVE. Topologically, residues 22-832 are extracellular; it reads RVVRVPAGTL…MDVLNAFKYP (811 aa). Intrachain disulfides connect cysteine 43–cysteine 119 and cysteine 169–cysteine 247. N-linked (GlcNAc...) asparagine glycosylation is present at asparagine 44. The Cell attachment site motif lies at 89-91; sequence RGD. At threonine 271 the chain carries Phosphothreonine. Ig-like C2-type domains follow at residues 276-389, 406-527, 544-662, and 688-813; these read PTAL…WHKV, PEYQ…RNSS, ASED…AWSP, and PIFN…AEIH. Cysteine 299 and cysteine 373 are disulfide-bonded. Asparagine 300, asparagine 383, and asparagine 413 each carry an N-linked (GlcNAc...) asparagine glycan. Residues 424-427 carry the Endoplasmic reticulum retention signal motif; that stretch reads PTEL. A disulfide bridge connects residues cysteine 429 and cysteine 515. N-linked (GlcNAc...) asparagine glycosylation is found at asparagine 525, asparagine 600, asparagine 618, and asparagine 691. A disulfide bond links cysteine 571 and cysteine 655. A Cell attachment site motif is present at residues 703–705; that stretch reads RGD. Cysteine 711 and cysteine 793 are joined by a disulfide. A helical membrane pass occupies residues 833–853; it reads LLIGVGLSTVIGLLSCLIGYC. Residues 854–879 lie on the Cytoplasmic side of the membrane; sequence SSHWCCKKEVRETRRERRRLMSMEMD.

In terms of assembly, interacts with CD9 and CD81. Part of a complex composed of CD9, CD81 and IGSF8. Also seems to interact with CD63, CD82 and CD151. In terms of tissue distribution, reproductive tissues, lung and heart.

It is found in the endoplasmic reticulum membrane. The protein localises to the golgi apparatus. The protein resides in the trans-Golgi network membrane. Inhibits the binding of prostaglandin F2-alpha (PGF2-alpha) to its specific FP receptor, by decreasing the receptor number rather than the affinity constant. Functional coupling with the prostaglandin F2-alpha receptor seems to occur. In myoblasts, associates with tetraspanins CD9 and CD81 to prevent myotube fusion during muscle regeneration. The polypeptide is Prostaglandin F2 receptor negative regulator (Ptgfrn) (Rattus norvegicus (Rat)).